A 577-amino-acid polypeptide reads, in one-letter code: Jasmonoyl--L-amino acid synthetase JAR4 (577 aa).

ATP is bound at residue serine 99. Serine 102 provides a ligand contact to jasmonate. ATP is bound by residues methionine 119, threonine 122, glycine 163, asparagine 168, and 331–336 (GSSEGW). Residue 166–170 (TTNVY) coordinates an L-alpha-amino acid. A jasmonate-binding site is contributed by 328–331 (ADYG). Position 531 to 535 (531 to 535 (KILDH)) interacts with an L-alpha-amino acid.

Belongs to the IAA-amido conjugating enzyme family.

The enzyme catalyses a jasmonate + an L-alpha-amino acid + ATP = a jasmonyl-L-amino acid + AMP + diphosphate + H(+). Its function is as follows. Catalyzes the synthesis of jasmonate-amino acid conjugates by adenylation. Catalyzes the conjugation of jasmonate (JA) to Ile, Leu and Val. Catalyzes the conjugation of jasmonate (JA) to Ile to mediate defense signaling and resistance to the herbivore Manduca sexta caterpillars. This Nicotiana attenuata (Coyote tobacco) protein is Jasmonoyl--L-amino acid synthetase JAR4.